The primary structure comprises 494 residues: Amidophosphoribosyltransferase (494 aa).

Positions 1–10 (MSNYSGLNEE) are excised as a propeptide. Cysteine 11 acts as the Nucleophile in catalysis. The Glutamine amidotransferase type-2 domain occupies 11–231 (CGVFGIWNHP…AGEYVVITDE (221 aa)). Residues serine 294, aspartate 356, and aspartate 357 each coordinate Mg(2+).

The protein in the C-terminal section; belongs to the purine/pyrimidine phosphoribosyltransferase family. Mg(2+) serves as cofactor.

It catalyses the reaction 5-phospho-beta-D-ribosylamine + L-glutamate + diphosphate = 5-phospho-alpha-D-ribose 1-diphosphate + L-glutamine + H2O. It participates in purine metabolism; IMP biosynthesis via de novo pathway; N(1)-(5-phospho-D-ribosyl)glycinamide from 5-phospho-alpha-D-ribose 1-diphosphate: step 1/2. Functionally, catalyzes the formation of phosphoribosylamine from phosphoribosylpyrophosphate (PRPP) and glutamine. The polypeptide is Amidophosphoribosyltransferase (Staphylococcus epidermidis (strain ATCC 35984 / DSM 28319 / BCRC 17069 / CCUG 31568 / BM 3577 / RP62A)).